A 66-amino-acid polypeptide reads, in one-letter code: Nigrocin-2ISa (66 aa).

A signal peptide spans 1 to 22; it reads MFTLKKSMLLLFFLGTINLSLC. A propeptide spans 23 to 43 (removed in mature form); it reads QEERDAEEERRDEDNAKMEEI. Cysteines 60 and 66 form a disulfide.

In terms of tissue distribution, expressed by the skin glands.

The protein localises to the secreted. Functionally, has antimicrobial activity against Gram-negative bacterium E.coli ATCC 8739 (MIC=25 ug), against Gram positive bacteria S.aureus ATCC 6538 (MIC=3.1 ug), methicillin-resistant S.aureus ATCC 43300 (MIC=12.5 ug), B.subtilis ATCC 6633 (MIC=12.5 ug) and against fungus C.albicans ATCC 90028 (MIC=50 ug). This chain is Nigrocin-2ISa, found in Odorrana ishikawae (Ishikawa's frog).